We begin with the raw amino-acid sequence, 156 residues long: MKLIVAAVGTRMPGWVETAWDDYAKRLPADCALELREIKPEPRTSGKTPAQMMAAEARRIETALPPGVLRIALDERGRDLTTVALSQQLEKWRAGGRDVAFLVGGPDGLDAALKASCEGLLRLSSLTLPHPMVRVLLAEQLYRAWAIMTNHPYHRA.

Residues Leu73, Gly104, and 123–128 each bind S-adenosyl-L-methionine; that span reads LSSLTL.

The protein belongs to the RNA methyltransferase RlmH family. As to quaternary structure, homodimer.

It localises to the cytoplasm. It carries out the reaction pseudouridine(1915) in 23S rRNA + S-adenosyl-L-methionine = N(3)-methylpseudouridine(1915) in 23S rRNA + S-adenosyl-L-homocysteine + H(+). Specifically methylates the pseudouridine at position 1915 (m3Psi1915) in 23S rRNA. This Bordetella bronchiseptica (strain ATCC BAA-588 / NCTC 13252 / RB50) (Alcaligenes bronchisepticus) protein is Ribosomal RNA large subunit methyltransferase H.